Consider the following 206-residue polypeptide: Putative acetyltransferase OgpAT (206 aa).

One can recognise an N-acetyltransferase domain in the interval 5–205; sequence VVIRRATAAD…EVVVGRRLLD (201 aa). Acetyl-CoA contacts are provided by residues 135–138, 144–148, 175–177, and His-184; these read HIDL, GRGVG, and NPR.

Belongs to the acetyltransferase family. In terms of assembly, monomer.

Its function is as follows. Binds acetyl-CoA, but not butyryl-CoA or decanoyl-CoA. May have acetyltransferase activity. The chain is Putative acetyltransferase OgpAT from Oceanicola granulosus (strain ATCC BAA-861 / DSM 15982 / KCTC 12143 / HTCC2516).